A 258-amino-acid chain; its full sequence is Trans-aconitate 2-methyltransferase (258 aa).

It belongs to the methyltransferase superfamily. Tam family.

Its subcellular location is the cytoplasm. The enzyme catalyses trans-aconitate + S-adenosyl-L-methionine = (E)-3-(methoxycarbonyl)pent-2-enedioate + S-adenosyl-L-homocysteine. Catalyzes the S-adenosylmethionine monomethyl esterification of trans-aconitate. This Acidovorax sp. (strain JS42) protein is Trans-aconitate 2-methyltransferase.